A 579-amino-acid chain; its full sequence is L-arabinonate dehydratase (579 aa).

Cys59 contacts [2Fe-2S] cluster. Glu91 is a Mg(2+) binding site. Cys127 provides a ligand contact to [2Fe-2S] cluster. Mg(2+) is bound at residue Asp128. Residue Cys200 participates in [2Fe-2S] cluster binding. Position 453 (Glu453) interacts with Mg(2+).

Belongs to the IlvD/Edd family. Homotetramer. [2Fe-2S] cluster is required as a cofactor. The cofactor is Mg(2+).

The catalysed reaction is L-arabinonate = 2-dehydro-3-deoxy-L-arabinonate + H2O. It carries out the reaction D-galactonate = 2-dehydro-3-deoxy-D-galactonate + H2O. The enzyme catalyses D-fuconate = 2-dehydro-3-deoxy-D-fuconate + H2O. It functions in the pathway carbohydrate metabolism. In terms of biological role, catalyzes the dehydration of L-arabinonate to 2-dehydro-3-deoxy-L-arabinonate during L-arabinose degradation. Can also dehydrate D-galactonate and D-fuconate with good catalytic efficiency. Has weak activity with D-xylonate and D-gluconate. This Rhizobium leguminosarum bv. trifolii (strain WSM2304) protein is L-arabinonate dehydratase.